We begin with the raw amino-acid sequence, 1040 residues long: MSRHSQLKLAMPSVHGAPATAPGSPMNAKARSVKLGLGVNQRTGRVQWCPGLTCCKMLLLLPVVMLPLTLVLILIMRLDGMLAALQLNEQRMRDLRNSHSEVPVYMEDYEALLPEGSTYNDLINEEFILPASKRTQLQILAAERARRCQPYRYGNGESMELEERNTLMKDSRTSFLPLGIPRECLGSGIELDIKPIDEEAYQRQKKRYQDIAPYWLEKIRIRERREAERHAEEASAEISEATAALQSFWNEEGTREGIRMTQAKTMKRYMDNKVDPCVDFYKYACGNWERLHPIPKDKAGFDTFEMLRESLDLVLRNLLEKNTPVHSAAELRKSPVRNTLFKLNEQGEGEGEADQAAELTAERLRRHIVSKRQLLNRVLVRYKRYTNGTKRKRLIETPRERTKEEEAAPPVVLPKDKTKDKSDNEEQLHVPTDFLKPHQDAQLKAKNLYRSCVNSAVLAKRGLEPLHTLIRELGGWPVLESQWSESNFNWQVLAATLRRYNNDILIVQWVGADIKNSEENIVQFDQTGLGLPTREYFLQPSNAKYLQAYQRYMAEVMHKMGASKADAQRVASELVAFETQLAGITAPAEQRLNVTKLYKRMTLDQLQAVVPEIKWRAYLQSLQDREVLGTEEVVIYAVEYMSKLVTLLDETDPRTVSNYMMWRFVRHRINNVDDRFDDIKQSFYHALFGREESPQRWKVCIAQVNTNMGMAVGSMFVSRYFDNNSKRDTLRMTHDLQQAFRDILKTTDWLDDTTKQLAEEKVNAMSLKIGYPDFILNPSELNSKYAGIEIYPEKYFENTLNVLLHTAKTEQAKLHERVNKTNWQTAPAIVNAYYSRNKNQIMFPAGILQPPFYHRHFPKSLNFGGIGVVIGHELTHGFDDKGRLFDRNGNIHKWWTDSSIRGFDERARCIIAQYSNYTVEEVGIVLNGESTQGENIADNGGLRQAFHAYQRWLKEHPSEVSDEILPGLNMTGPQLFFLNFGQVWCGAMRPEAIRNKLNTAIHSPGRFRVIGTLSNSVDFAREFNCPLGSPMNPQKKCSVW.

The disordered stretch occupies residues 1 to 27; it reads MSRHSQLKLAMPSVHGAPATAPGSPMN. Residues 1-45 are required for maintaining muscle integrity; the sequence is MSRHSQLKLAMPSVHGAPATAPGSPMNAKARSVKLGLGVNQRTGR. Residues 1 to 55 are Cytoplasmic-facing; sequence MSRHSQLKLAMPSVHGAPATAPGSPMNAKARSVKLGLGVNQRTGRVQWCPGLTCC. A helical; Signal-anchor for type II membrane protein membrane pass occupies residues 56 to 76; the sequence is KMLLLLPVVMLPLTLVLILIM. Topologically, residues 77–1040 are extracellular; the sequence is RLDGMLAALQ…MNPQKKCSVW (964 aa). Positions 251–1040 constitute a Peptidase M13 domain; that stretch reads EEGTREGIRM…MNPQKKCSVW (790 aa). Disulfide bonds link cysteine 277-cysteine 1025, cysteine 285-cysteine 985, cysteine 452-cysteine 700, and cysteine 909-cysteine 1037. N-linked (GlcNAc...) asparagine glycosylation is found at asparagine 387, asparagine 593, asparagine 723, and asparagine 819. Histidine 872 lines the Zn(2+) pocket. Glutamate 873 is an active-site residue. Residue histidine 876 coordinates Zn(2+). Asparagine 916 carries N-linked (GlcNAc...) asparagine glycosylation. Residue glutamate 934 coordinates Zn(2+). Aspartate 938 functions as the Proton donor in the catalytic mechanism. Asparagine 969 is a glycosylation site (N-linked (GlcNAc...) asparagine).

It belongs to the peptidase M13 family. As to quaternary structure, interacts (via intracellular domain) with the putative carbohydrate kinase CG3534. Zn(2+) serves as cofactor. In terms of tissue distribution, expressed in the gonads and testes of adults, and the adult and larval brain (at protein level). In embryos, expressed in the pericardial, muscle founder and glia cells (at protein level). In stage 12 embryos, expressed in specific dorsal muscle founder cells such as DA1 and DO2, and also in the certain pericardial progenitor cells where expression persists throughout embryogenesis. Expressed in the glia cells of the embryonic, larval and adult central nervous system. Expressed in the somatic muscles of larvae, pupae and adults. Isoform A: Detected in the male abdomen (at protein level). Isoform B: Not detected in the male or female abdomen (at protein level).

It localises to the cell membrane. The protein localises to the sarcoplasmic reticulum. Its subcellular location is the cytoplasm. It catalyses the reaction Preferential cleavage of polypeptides between hydrophobic residues, particularly with Phe or Tyr at P1'.. Its function is as follows. Metalloendoprotease which cleaves peptides at the amino side of hydrophobic residues - such as the hormones Akh and Dh31, and the neuropeptides Allatostatins (AST1, AST2, AST3 and AST4), Crz, Drosulfakinins (DSK-I and DSK-II), Lk, sNPF and the tachykinin peptides TK-1, TK-2, TK-4 and TK-5. Functions in female fertility, memory formation and may also act in regulating insulin signaling and food intake. Likely to be involved in controlling feeding behavior and the expression of insulin-like peptides by cleaving various regulatory peptides that include certain Drosulfakinins, Allatostatins and tachykinin peptides. Required in females for normal patterns of egg laying and hatching. Required in the dorsal paired medial neurons for the proper formation of long-term (LTM) and middle-term memories (MTM). Also required in the mushroom body neurons where it functions redundantly with neprilysins Nep2 and Nep3, in normal LTM formation. Cleaves angiotensin-1 and tachykinin neuropeptide substance P. Functions in maintaining muscle integrity, possibly independently of its endopeptidase activity. In Drosophila melanogaster (Fruit fly), this protein is Neprilysin-4.